We begin with the raw amino-acid sequence, 186 residues long: Ribosome maturation factor RimM (186 aa).

A PRC barrel domain is found at 93-168; the sequence is EDDFYLVDLI…VLIDPPQEEN (76 aa). The tract at residues 163 to 186 is disordered; the sequence is PPQEENAPEFGRNELGHDDGGEAA. Over residues 173–186 the composition is skewed to basic and acidic residues; sequence GRNELGHDDGGEAA.

It belongs to the RimM family. Binds ribosomal protein uS19.

The protein resides in the cytoplasm. In terms of biological role, an accessory protein needed during the final step in the assembly of 30S ribosomal subunit, possibly for assembly of the head region. Essential for efficient processing of 16S rRNA. May be needed both before and after RbfA during the maturation of 16S rRNA. It has affinity for free ribosomal 30S subunits but not for 70S ribosomes. The chain is Ribosome maturation factor RimM from Granulibacter bethesdensis (strain ATCC BAA-1260 / CGDNIH1).